The chain runs to 244 residues: Phosphoadenosine 5'-phosphosulfate reductase (244 aa).

The active-site Nucleophile; cysteine thiosulfonate intermediate is the Cys239.

It belongs to the PAPS reductase family. CysH subfamily.

The protein resides in the cytoplasm. It carries out the reaction [thioredoxin]-disulfide + sulfite + adenosine 3',5'-bisphosphate + 2 H(+) = [thioredoxin]-dithiol + 3'-phosphoadenylyl sulfate. It participates in sulfur metabolism; hydrogen sulfide biosynthesis; sulfite from sulfate: step 3/3. In terms of biological role, catalyzes the formation of sulfite from phosphoadenosine 5'-phosphosulfate (PAPS) using thioredoxin as an electron donor. This is Phosphoadenosine 5'-phosphosulfate reductase from Salmonella heidelberg (strain SL476).